The sequence spans 20 residues: Chemoheterotroph-specific protein (20 aa).

The chain is Chemoheterotroph-specific protein from Thiomonas delicata (Thiomonas cuprina).